We begin with the raw amino-acid sequence, 703 residues long: Polyribonucleotide nucleotidyltransferase (703 aa).

D486 and D492 together coordinate Mg(2+). In terms of domain architecture, KH spans P554 to I613. The S1 motif domain occupies G623–K691.

The protein belongs to the polyribonucleotide nucleotidyltransferase family. Mg(2+) serves as cofactor.

It is found in the cytoplasm. The catalysed reaction is RNA(n+1) + phosphate = RNA(n) + a ribonucleoside 5'-diphosphate. In terms of biological role, involved in mRNA degradation. Catalyzes the phosphorolysis of single-stranded polyribonucleotides processively in the 3'- to 5'-direction. The polypeptide is Polyribonucleotide nucleotidyltransferase (Ruminiclostridium cellulolyticum (strain ATCC 35319 / DSM 5812 / JCM 6584 / H10) (Clostridium cellulolyticum)).